A 63-amino-acid chain; its full sequence is Prokaryotic ubiquitin-like protein Pup 1 (63 aa).

Basic and acidic residues-rich tracts occupy residues 1-12 (MSQEKVQRHGGG) and 24-33 (GQERREKLGE). Residues 1-35 (MSQEKVQRHGGGDGEEESGPEAAGQERREKLGEDV) are disordered. Positions 20-57 (PEAAGQERREKLGEDVDAILDEIDDVLEENAEDFVRAY) are ARC ATPase binding. A coiled-coil region spans residues 25 to 51 (QERREKLGEDVDAILDEIDDVLEENAE). The residue at position 63 (Gln63) is a Deamidated glutamine. Gln63 is covalently cross-linked (Isoglutamyl lysine isopeptide (Gln-Lys) (interchain with K-? in acceptor proteins)).

It belongs to the prokaryotic ubiquitin-like protein family. In terms of assembly, strongly interacts with the proteasome-associated ATPase ARC through a hydrophobic interface; the interacting region of Pup lies in its C-terminal half. There is one Pup binding site per ARC hexamer ring. Post-translationally, is modified by deamidation of its C-terminal glutamine to glutamate by the deamidase Dop, a prerequisite to the subsequent pupylation process.

The protein operates within protein degradation; proteasomal Pup-dependent pathway. Protein modifier that is covalently attached to lysine residues of substrate proteins, thereby targeting them for proteasomal degradation. The tagging system is termed pupylation. The polypeptide is Prokaryotic ubiquitin-like protein Pup 1 (Saccharopolyspora erythraea (strain ATCC 11635 / DSM 40517 / JCM 4748 / NBRC 13426 / NCIMB 8594 / NRRL 2338)).